The following is a 376-amino-acid chain: cAMP-dependent protein kinase type I regulatory subunit (376 aa).

Positions 1-131 (MSYMMAKTLE…ALSKAIAKNV (131 aa)) are dimerization and phosphorylation. The segment at 72–93 (PDDCEDLSPMPQTAAPPVRRRG) is disordered. Residues 91-95 (RRGGI) carry the Pseudophosphorylation motif motif. Ser96 is modified (phosphoserine). Residues 132 to 247 (LFAH…FLSR), Glu197, Arg206, 250 to 371 (ILES…YNSF), Glu321, and Arg330 each bind 3',5'-cyclic AMP.

It belongs to the cAMP-dependent kinase regulatory chain family. Tetramer, composed of 2 regulatory (R) and 2 catalytic (C) subunits. In the presence of cAMP it dissociates into 2 active monomeric C subunits and an R dimer. The pseudophosphorylation site binds to the substrate-binding region of the catalytic chain but is not phosphorylated. The physiological significance of phosphorylations by other kinases is unclear.

This Drosophila melanogaster (Fruit fly) protein is cAMP-dependent protein kinase type I regulatory subunit (Pka-R1).